A 264-amino-acid polypeptide reads, in one-letter code: MAAAAVARLWWRGILGASALTRGTGRPSVLLLPVRRESAGADTRPTVRPRNDVAHKQLSAFGEYVAEILPKYVQQVQVSCFNELEVCIHPDGVIPVLTFLRDHTNAQFKSLVDLTAVDVPTRQNRFEIVYNLLSLRFNSRIRVKTYTDELTPIESAVSVFKAANWYEREIWDMFGVFFANHPDLRRILTDYGFEGHPFRKDFPLSGYVELRYDDEVKRVVAEPVELAQEFRKFDLNSPWEAFPVYRQPPESLKLEAGDKNLMPN.

The N-terminal 36 residues, 1 to 36 (MAAAAVARLWWRGILGASALTRGTGRPSVLLLPVRR), are a transit peptide targeting the mitochondrion.

This sequence belongs to the complex I 30 kDa subunit family. As to quaternary structure, core subunit of respiratory chain NADH dehydrogenase (Complex I) which is composed of 45 different subunits. Interacts with NDUFAF3. Interacts with RAB5IF. Found in subcomplexes containing subunits NDUFS2, MT-ND1 and NDUFA13.

It localises to the mitochondrion inner membrane. The catalysed reaction is a ubiquinone + NADH + 5 H(+)(in) = a ubiquinol + NAD(+) + 4 H(+)(out). Core subunit of the mitochondrial membrane respiratory chain NADH dehydrogenase (Complex I) which catalyzes electron transfer from NADH through the respiratory chain, using ubiquinone as an electron acceptor. Essential for the catalytic activity and assembly of complex I. In Pan troglodytes (Chimpanzee), this protein is NADH dehydrogenase [ubiquinone] iron-sulfur protein 3, mitochondrial (NDUFS3).